The chain runs to 921 residues: Phototropin-1A (921 aa).

The segment covering 1-11 has biased composition (gly residues); sequence MASKGTEGGHG. Disordered stretches follow at residues 1–59 and 88–118; these read MASK…SPFL and TGLP…QSAA. Positions 40–51 are enriched in low complexity; the sequence is SSASSFRTAAAA. Over residues 97 to 117 the composition is skewed to polar residues; it reads RPSSGSARTSSEDNPQQQQSA. Positions 123-197 constitute a PAS 1 domain; the sequence is VSEELRAALS…KIRQSLANGS (75 aa). FMN is bound by residues 172-177, Arg-190, Asn-205, Asn-215, and Gln-236; that span reads NCRFLQ. S-4a-FMN cysteine is present on Cys-173. Positions 197–251 constitute a PAC 1 domain; sequence SNYCGRILNYKKDGTPFWNLLTIAPIKDEDGRLLKFIGMQVEVSKYTEGKKDTVV. Residues 286 to 295 are compositionally biased toward polar residues; sequence RSLSESSNNT. Disordered stretches follow at residues 286 to 347 and 364 to 390; these read RSLS…NRTR and SVEK…ESFE. 2 stretches are compositionally biased toward basic and acidic residues: residues 312-321 and 364-376; these read PSKRSSESGS and SVEK…RDED. The PAS 2 domain occupies 400 to 473; sequence RGIDLATTLE…RKIRDAIDNQ (74 aa). Residues 449-454, Arg-467, Asn-482, Asn-492, and Gln-513 each bind FMN; that span reads NCRFLQ. Cys-450 is modified (S-4a-FMN cysteine). The 55-residue stretch at 474–528 folds into the PAC 2 domain; it reads AEVTVQLINYTKSGKKFWNLFHLQPMRDQKGDVQYFIGVQLDGTEHVQDDAAKEG. Positions 594–881 constitute a Protein kinase domain; the sequence is FRPVKPLGSG…ANEIKGHPFF (288 aa). ATP is bound by residues 600–608 and Lys-623; that span reads LGSGDTGSV. Asp-719 functions as the Proton acceptor in the catalytic mechanism.

The protein belongs to the protein kinase superfamily. Ser/Thr protein kinase family. Homodimer. It depends on FMN as a cofactor. Autophosphorylated in response to blue light irradiation. In terms of processing, 2 molecules of FMN bind covalently to cysteines after exposure to blue light and are reversed in the dark. In terms of tissue distribution, highly expressed in coleoptiles of dark-grown seedlings.

It catalyses the reaction L-seryl-[protein] + ATP = O-phospho-L-seryl-[protein] + ADP + H(+). It carries out the reaction L-threonyl-[protein] + ATP = O-phospho-L-threonyl-[protein] + ADP + H(+). In terms of biological role, protein kinase that acts as a blue light photoreceptor in a signal-transduction pathway for phototropic responses. Regulates a wide range of physiological activities in plants that maximize the efficiency of photosynthesis, such as chloroplast relocations, stomata opening, and leaf expansion. The sequence is that of Phototropin-1A (PHOT1A) from Oryza sativa subsp. japonica (Rice).